We begin with the raw amino-acid sequence, 1368 residues long: DNA-directed RNA polymerase subunit beta (1368 aa).

It belongs to the RNA polymerase beta chain family. As to quaternary structure, the RNAP catalytic core consists of 2 alpha, 1 beta, 1 beta' and 1 omega subunit. When a sigma factor is associated with the core the holoenzyme is formed, which can initiate transcription.

The enzyme catalyses RNA(n) + a ribonucleoside 5'-triphosphate = RNA(n+1) + diphosphate. Functionally, DNA-dependent RNA polymerase catalyzes the transcription of DNA into RNA using the four ribonucleoside triphosphates as substrates. This chain is DNA-directed RNA polymerase subunit beta, found in Cupriavidus necator (strain ATCC 17699 / DSM 428 / KCTC 22496 / NCIMB 10442 / H16 / Stanier 337) (Ralstonia eutropha).